A 35-amino-acid polypeptide reads, in one-letter code: Pheromone-binding protein 1 (35 aa).

The protein belongs to the PBP/GOBP family. In terms of assembly, homodimer. As to expression, antenna.

Functionally, this major soluble protein in olfactory sensilla of male moths might serve to solubilize the extremely hydrophobic pheromone molecules and to transport pheromone through the aqueous lymph to receptors located on olfactory cilia. The protein is Pheromone-binding protein 1 of Lymantria dispar (Gypsy moth).